We begin with the raw amino-acid sequence, 712 residues long: Rap1 GTPase-activating protein 2 (712 aa).

The segment at 1–33 (MLAGLKVKKQELANSSDVTLPDRPLSPPLTAPP) is disordered. Serine 26 bears the Phosphoserine mark. Position 30 is a phosphothreonine (threonine 30). Residues 229–445 (IVSYDEHDVN…RTRAALLDNL (217 aa)) enclose the Rap-GAP domain. A phosphoserine mark is found at serine 488, serine 495, serine 525, serine 539, serine 545, serine 593, and serine 594. Residues 529–712 (AAATAKNQSR…LSHASSSAGH (184 aa)) are disordered. The segment covering 566 to 594 (DSASSTPKTPDGGHSSQEIKSETSSNPSS) has biased composition (polar residues). The segment covering 599-612 (PNKEKPFIKLKENG) has biased composition (basic and acidic residues). The span at 617–629 (SRSSSSTSSFSST) shows a compositional bias: low complexity. The span at 641–652 (SGSSQPSTTSPF) shows a compositional bias: polar residues. Low complexity predominate over residues 660–669 (SPSPSSESPS). The span at 681 to 694 (RSPTDAKSRNSPRS) shows a compositional bias: polar residues.

The protein resides in the cytoplasm. In terms of biological role, GTPase activator for the nuclear Ras-related regulatory protein RAP-1A (KREV-1), converting it to the putatively inactive GDP-bound state. This Mus musculus (Mouse) protein is Rap1 GTPase-activating protein 2 (Rap1gap2).